Here is a 228-residue protein sequence, read N- to C-terminus: ATP-dependent dethiobiotin synthetase BioD 1 (228 aa).

E13–V18 is a binding site for ATP. Position 17 (T17) interacts with Mg(2+). K38 is an active-site residue. S42 is a substrate binding site. ATP contacts are provided by residues D55, E116–G119, N176–D177, and P205–L207. Mg(2+)-binding residues include D55 and E116.

It belongs to the dethiobiotin synthetase family. Homodimer. The cofactor is Mg(2+).

It localises to the cytoplasm. It carries out the reaction (7R,8S)-7,8-diammoniononanoate + CO2 + ATP = (4R,5S)-dethiobiotin + ADP + phosphate + 3 H(+). Its pathway is cofactor biosynthesis; biotin biosynthesis; biotin from 7,8-diaminononanoate: step 1/2. In terms of biological role, catalyzes a mechanistically unusual reaction, the ATP-dependent insertion of CO2 between the N7 and N8 nitrogen atoms of 7,8-diaminopelargonic acid (DAPA, also called 7,8-diammoniononanoate) to form a ureido ring. The chain is ATP-dependent dethiobiotin synthetase BioD 1 from Salmonella typhimurium (strain LT2 / SGSC1412 / ATCC 700720).